The sequence spans 191 residues: Fe/S biogenesis protein NfuA (191 aa).

[4Fe-4S] cluster-binding residues include Cys149 and Cys152.

This sequence belongs to the NfuA family. Homodimer. The cofactor is [4Fe-4S] cluster.

Its function is as follows. Involved in iron-sulfur cluster biogenesis. Binds a 4Fe-4S cluster, can transfer this cluster to apoproteins, and thereby intervenes in the maturation of Fe/S proteins. Could also act as a scaffold/chaperone for damaged Fe/S proteins. The protein is Fe/S biogenesis protein NfuA of Sodalis glossinidius (strain morsitans).